The following is a 136-amino-acid chain: Protein NrdI (136 aa).

The protein belongs to the NrdI family.

Its function is as follows. Probably involved in ribonucleotide reductase function. This chain is Protein NrdI, found in Citrobacter koseri (strain ATCC BAA-895 / CDC 4225-83 / SGSC4696).